A 233-amino-acid polypeptide reads, in one-letter code: UPF0128 protein MJ1463 (233 aa).

Belongs to the UPF0128 family.

This Methanocaldococcus jannaschii (strain ATCC 43067 / DSM 2661 / JAL-1 / JCM 10045 / NBRC 100440) (Methanococcus jannaschii) protein is UPF0128 protein MJ1463.